Consider the following 36-residue polypeptide: Serum amyloid P-component (36 aa).

A Pentraxin (PTX) domain is found at 6–36 (SGKVFVIPMATSTSHVKLHARVSEPISAMTM).

It belongs to the pentraxin family. In terms of assembly, homopentamer. Discoid arrangement of 5 covalently bound subunits. Ca(2+) serves as cofactor.

Its subcellular location is the secreted. In Salmo salar (Atlantic salmon), this protein is Serum amyloid P-component.